The chain runs to 323 residues: tRNA dimethylallyltransferase (323 aa).

G18–S25 contributes to the ATP binding site. T20–S25 serves as a coordination point for substrate. 3 interaction with substrate tRNA regions span residues D43 to Q46, Q167 to R171, and R249 to R254.

Belongs to the IPP transferase family. In terms of assembly, monomer. It depends on Mg(2+) as a cofactor.

It carries out the reaction adenosine(37) in tRNA + dimethylallyl diphosphate = N(6)-dimethylallyladenosine(37) in tRNA + diphosphate. In terms of biological role, catalyzes the transfer of a dimethylallyl group onto the adenine at position 37 in tRNAs that read codons beginning with uridine, leading to the formation of N6-(dimethylallyl)adenosine (i(6)A). In Nitrosospira multiformis (strain ATCC 25196 / NCIMB 11849 / C 71), this protein is tRNA dimethylallyltransferase.